The following is a 356-amino-acid chain: sn-glycerol-3-phosphate import ATP-binding protein UgpC (356 aa).

The 232-residue stretch at 4-235 (LKLQAVTKSW…PASLFVASFI (232 aa)) folds into the ABC transporter domain. 37–44 (GPSGCGKS) is a binding site for ATP.

Belongs to the ABC transporter superfamily. sn-glycerol-3-phosphate importer (TC 3.A.1.1.3) family. In terms of assembly, the complex is composed of two ATP-binding proteins (UgpC), two transmembrane proteins (UgpA and UgpE) and a solute-binding protein (UgpB).

It is found in the cell inner membrane. The enzyme catalyses sn-glycerol 3-phosphate(out) + ATP + H2O = sn-glycerol 3-phosphate(in) + ADP + phosphate + H(+). Functionally, part of the ABC transporter complex UgpBAEC involved in sn-glycerol-3-phosphate (G3P) import. Responsible for energy coupling to the transport system. The polypeptide is sn-glycerol-3-phosphate import ATP-binding protein UgpC (Escherichia coli (strain UTI89 / UPEC)).